Consider the following 517-residue polypeptide: Protein disulfide-isomerase A5 (517 aa).

An N-terminal signal peptide occupies residues 1-21 (MARAWGLLLAIGVVLPTWLSS). 4 disulfides stabilise this stretch: Cys-83-Cys-92, Cys-180-Cys-183, Cys-303-Cys-306, and Cys-424-Cys-427. Thioredoxin domains lie at 132-259 (FLKD…NPLP), 268-382 (PWAD…NPEA), and 376-504 (WMQN…TLRE). A Prevents secretion from ER motif is present at residues 514 to 517 (REEL).

The protein belongs to the protein disulfide isomerase family. Interacts with CALR (via P-domain).

The protein localises to the endoplasmic reticulum lumen. The catalysed reaction is Catalyzes the rearrangement of -S-S- bonds in proteins.. This Mus musculus (Mouse) protein is Protein disulfide-isomerase A5 (Pdia5).